The primary structure comprises 327 residues: uncharacterized protein (327 aa).

In terms of domain architecture, S4 RNA-binding spans 12 to 84 (MRIDRYLTQQ…IPITILYEDD (73 aa)). The active site involves Asp137.

It belongs to the pseudouridine synthase RluA family.

It catalyses the reaction a uridine in RNA = a pseudouridine in RNA. This is an uncharacterized protein from Chlorobaculum parvum (strain DSM 263 / NCIMB 8327) (Chlorobium vibrioforme subsp. thiosulfatophilum).